Here is a 548-residue protein sequence, read N- to C-terminus: Leucine-rich repeat LGI family member 3 (548 aa).

An N-terminal signal peptide occupies residues 1-30; it reads MAGLRARRGPGRRLLVLSTLGFCLMLQVSA. In terms of domain architecture, LRRNT spans 31–64; it reads KRPPKTPPCPPSCSCTRDTAFCVDSKSVPKNLPS. 3 LRR repeats span residues 89–110, 113–134, and 137–158; these read LLQF…AFIG, HLQY…TFRG, and SLTH…IFRP. The region spanning 170 to 220 is the LRRCT domain; it reads NALNCDCKVKWLVEWLAHTNTTVAPIYCASPPRFQEHKVQDLPLREFDCIT. N189 carries an N-linked (GlcNAc...) asparagine glycan. EAR repeat units follow at residues 222–264 and 268–310; these read DFVL…KWDY and QLRD…HWDP. The N-linked (GlcNAc...) asparagine glycan is linked to N311. EAR repeat units follow at residues 314-361, 363-406, 410-453, 455-497, and 501-543; these read RFTK…RWHQ, GFYS…QWSR, QFVA…RWEG, RFSE…QWDE, and KFVR…RHVV.

In terms of assembly, interacts with STX1A. In terms of tissue distribution, brain.

The protein localises to the secreted. The protein resides in the cytoplasmic vesicle. Its subcellular location is the secretory vesicle. It is found in the synaptic vesicle. It localises to the synapse. The protein localises to the synaptosome. The protein resides in the cell projection. Its subcellular location is the axon. May participate in the regulation of neuronal exocytosis. This is Leucine-rich repeat LGI family member 3 (Lgi3) from Mus musculus (Mouse).